Reading from the N-terminus, the 657-residue chain is MAPWLELVFDVPLDKSFTYRACAAHAGEALVGRRVLAPFGARTLIGFVISESHSSPADCGGAVGTFKEIIRVIDREALFDQTHLACARWMAHFYLCALGQALCAVVPSRKRERTLSSFASCAGVRRTDTYALSGEQRKAIDAITASTGARSFYVHGVTGSGKTEVFLRAAEAVLARGKSVIYLVPEIALTHQVLQEVYVRFGSQAAVLHSALSGSQRLGEWRRIQCMRHCVVIGARSAIFAPLKRLGLVIMDEEHDSSYKSAHVPRYHARQVAMYRCADANCPFVMGSATPSVEAWYAMLRGAVRRLPLTARVAGGAPPRVEVVDVSKEALLLSTRLVDEIRKTKEAGYQSMLFLNRRGFSYSFQCRSCGYTLCCTQCAVPLTWHKRVGAMQCHYCGRQEAPPESCPCCHSFDTRYGGVGTEYIEEAVQALFPEYRIARVDTDALRSGHVQQTMEQFRAGKIDVLLGTQMIAKGFNFPTLRLVGIACADTGLHTPDFRAAERSFALMMQVAGRAGRYVDNGLVIIQTRNPAHPAVVCAQHGDCESFYAQELAQREALCFPPFVRLIRFVFRSKTRRKAKDAAYAAHALLTAQMPLGADVLGPAACVVAQVAGSYRMQILLRAPSFPVVQQVARSFLDEFRAPAGVYVESDVDPVNVL.

The 167-residue stretch at 143–309 (ITASTGARSF…LRGAVRRLPL (167 aa)) folds into the Helicase ATP-binding domain. An ATP-binding site is contributed by 156–163 (GVTGSGKT). A DEAH box motif is present at residues 252–255 (DEEH). Positions 366, 369, 375, 378, 393, 396, 406, and 409 each coordinate Zn(2+). One can recognise a Helicase C-terminal domain in the interval 390 to 570 (AMQCHYCGRQ…PFVRLIRFVF (181 aa)).

It belongs to the helicase family. PriA subfamily. As to quaternary structure, component of the replication restart primosome. Zn(2+) serves as cofactor.

The enzyme catalyses Couples ATP hydrolysis with the unwinding of duplex DNA by translocating in the 3'-5' direction.. The catalysed reaction is ATP + H2O = ADP + phosphate + H(+). Functionally, initiates the restart of stalled replication forks, which reloads the replicative helicase on sites other than the origin of replication. Recognizes and binds to abandoned replication forks and remodels them to uncover a helicase loading site. Promotes assembly of the primosome at these replication forks. The protein is Replication restart protein PriA of Treponema pallidum (strain Nichols).